The chain runs to 573 residues: Protein FAM200A (573 aa).

Positions 1 to 51 are disordered; that stretch reads MTPESRDTTDLSPRGTQEMEGIVVVKVEEEDEEDHFQKQRNKVESSPQVLS. Over 1–513 the chain is Extracellular; that stretch reads MTPESRDTTD…DEFPLLSRKS (513 aa). Residues 514 to 533 form a helical membrane-spanning segment; sequence ISLLLPFTTTYLCELGFSIL. Over 534–573 the chain is Cytoplasmic; the sequence is TRLKTKKRNRLNSAPDMRVALSSCVPDWKELMNRQAHPSH.

The protein belongs to the FAM200 family.

The protein localises to the membrane. The chain is Protein FAM200A (FAM200A) from Macaca fascicularis (Crab-eating macaque).